Reading from the N-terminus, the 732-residue chain is Elongation factor 2 (732 aa).

In terms of domain architecture, tr-type G spans 19–260 (ERIRNMGIAA…MVVRHLPNPL (242 aa)). GTP-binding positions include 28–35 (AHIDHGKT), 94–98 (DTPGH), and 148–151 (NKVD). Diphthamide is present on His597.

It belongs to the TRAFAC class translation factor GTPase superfamily. Classic translation factor GTPase family. EF-G/EF-2 subfamily.

It localises to the cytoplasm. Its function is as follows. Catalyzes the GTP-dependent ribosomal translocation step during translation elongation. During this step, the ribosome changes from the pre-translocational (PRE) to the post-translocational (POST) state as the newly formed A-site-bound peptidyl-tRNA and P-site-bound deacylated tRNA move to the P and E sites, respectively. Catalyzes the coordinated movement of the two tRNA molecules, the mRNA and conformational changes in the ribosome. The chain is Elongation factor 2 from Thermococcus onnurineus (strain NA1).